The primary structure comprises 251 residues: DNA repair protein RecO (251 aa).

This sequence belongs to the RecO family.

In terms of biological role, involved in DNA repair and RecF pathway recombination. The protein is DNA repair protein RecO of Acetivibrio thermocellus (strain ATCC 27405 / DSM 1237 / JCM 9322 / NBRC 103400 / NCIMB 10682 / NRRL B-4536 / VPI 7372) (Clostridium thermocellum).